The sequence spans 122 residues: Large ribosomal subunit protein uL14 (122 aa).

Belongs to the universal ribosomal protein uL14 family. Part of the 50S ribosomal subunit. Forms a cluster with proteins L3 and L19. In the 70S ribosome, L14 and L19 interact and together make contacts with the 16S rRNA in bridges B5 and B8.

Its function is as follows. Binds to 23S rRNA. Forms part of two intersubunit bridges in the 70S ribosome. This is Large ribosomal subunit protein uL14 from Pseudomonas paraeruginosa (strain DSM 24068 / PA7) (Pseudomonas aeruginosa (strain PA7)).